The primary structure comprises 226 residues: Ribose-5-phosphate isomerase A (226 aa).

Residues 28 to 31 (TGST), 83 to 86 (DGAD), and 97 to 100 (KGGG) each bind substrate. Residue E106 is the Proton acceptor of the active site. K124 provides a ligand contact to substrate.

This sequence belongs to the ribose 5-phosphate isomerase family. As to quaternary structure, homotetramer.

It carries out the reaction aldehydo-D-ribose 5-phosphate = D-ribulose 5-phosphate. It participates in carbohydrate biosynthesis; D-ribose 5-phosphate biosynthesis. Its function is as follows. Catalyzes the reversible conversion of ribose-5-phosphate to ribulose 5-phosphate. The sequence is that of Ribose-5-phosphate isomerase A from Methanocaldococcus jannaschii (strain ATCC 43067 / DSM 2661 / JAL-1 / JCM 10045 / NBRC 100440) (Methanococcus jannaschii).